Reading from the N-terminus, the 218-residue chain is Small ribosomal subunit protein uS3 (218 aa).

One can recognise a KH type-2 domain in the interval Ile38–Lys106.

This sequence belongs to the universal ribosomal protein uS3 family. Part of the 30S ribosomal subunit. Forms a tight complex with proteins S10 and S14.

In terms of biological role, binds the lower part of the 30S subunit head. Binds mRNA in the 70S ribosome, positioning it for translation. The chain is Small ribosomal subunit protein uS3 from Agathobacter rectalis (strain ATCC 33656 / DSM 3377 / JCM 17463 / KCTC 5835 / VPI 0990) (Eubacterium rectale).